Here is a 350-residue protein sequence, read N- to C-terminus: S-adenosylmethionine:tRNA ribosyltransferase-isomerase (350 aa).

The protein belongs to the QueA family. Monomer.

The protein localises to the cytoplasm. It carries out the reaction 7-aminomethyl-7-carbaguanosine(34) in tRNA + S-adenosyl-L-methionine = epoxyqueuosine(34) in tRNA + adenine + L-methionine + 2 H(+). It functions in the pathway tRNA modification; tRNA-queuosine biosynthesis. In terms of biological role, transfers and isomerizes the ribose moiety from AdoMet to the 7-aminomethyl group of 7-deazaguanine (preQ1-tRNA) to give epoxyqueuosine (oQ-tRNA). In Vibrio campbellii (strain ATCC BAA-1116), this protein is S-adenosylmethionine:tRNA ribosyltransferase-isomerase.